The following is a 76-amino-acid chain: uncharacterized protein (76 aa).

The 55-residue stretch at 6–60 (LKKNRLEKGFTQEEVAKAAQIGRAYYTMIENGTRKPSVIVSKKIGEKLGFDWTIF) folds into the HTH cro/C1-type domain. The segment at residues 17–36 (QEEVAKAAQIGRAYYTMIEN) is a DNA-binding region (H-T-H motif).

This is an uncharacterized protein from Bacillus subtilis (strain 168).